The primary structure comprises 215 residues: Protein-L-isoaspartate O-methyltransferase (215 aa).

S62 is a catalytic residue.

It belongs to the methyltransferase superfamily. L-isoaspartyl/D-aspartyl protein methyltransferase family.

It localises to the cytoplasm. The enzyme catalyses [protein]-L-isoaspartate + S-adenosyl-L-methionine = [protein]-L-isoaspartate alpha-methyl ester + S-adenosyl-L-homocysteine. Functionally, catalyzes the methyl esterification of L-isoaspartyl residues in peptides and proteins that result from spontaneous decomposition of normal L-aspartyl and L-asparaginyl residues. It plays a role in the repair and/or degradation of damaged proteins. This Ruegeria pomeroyi (strain ATCC 700808 / DSM 15171 / DSS-3) (Silicibacter pomeroyi) protein is Protein-L-isoaspartate O-methyltransferase.